Consider the following 168-residue polypeptide: G/U mismatch-specific DNA glycosylase (168 aa).

Belongs to the uracil-DNA glycosylase (UDG) superfamily. TDG/mug family. In terms of assembly, binds DNA as a monomer.

The protein resides in the cytoplasm. The enzyme catalyses Specifically hydrolyzes mismatched double-stranded DNA and polynucleotides, releasing free uracil.. Functionally, excises ethenocytosine and uracil, which can arise by alkylation or deamination of cytosine, respectively, from the corresponding mispairs with guanine in ds-DNA. It is capable of hydrolyzing the carbon-nitrogen bond between the sugar-phosphate backbone of the DNA and the mispaired base. The complementary strand guanine functions in substrate recognition. Required for DNA damage lesion repair in stationary-phase cells. This chain is G/U mismatch-specific DNA glycosylase, found in Klebsiella pneumoniae (strain 342).